A 480-amino-acid polypeptide reads, in one-letter code: Flotillin-like protein 2 (480 aa).

The S-palmitoyl cysteine moiety is linked to residue Cys-37. The stretch at 237–257 (ENQREAEVAQANSELAKKKAA) forms a coiled coil.

The protein belongs to the band 7/mec-2 family. Flotillin subfamily. May be palmitoylated. In terms of tissue distribution, expressed in flowers in green pods. Primarily expressed in vascular tissues. Upon induction of nodulation, expansion of expression in the root cortex in the region of elongating root hairs, which will eventually become colonized by bacteria. Expressed in the infection zone in nodules.

The protein resides in the cell membrane. The protein localises to the membrane. It is found in the caveola. Its function is as follows. May act as a scaffolding protein within caveolar membranes, functionally participating in formation of caveolae or caveolae-like vesicles. Required for early symbiotic events and nodules formation. The chain is Flotillin-like protein 2 (FLOT2) from Medicago truncatula (Barrel medic).